Reading from the N-terminus, the 228-residue chain is Ribonuclease HII (228 aa).

The RNase H type-2 domain occupies 11–202 (GPVAGVDEAG…VVAAAQLHGM (192 aa)). Positions 17, 18, and 111 each coordinate a divalent metal cation.

Belongs to the RNase HII family. It depends on Mn(2+) as a cofactor. Requires Mg(2+) as cofactor.

It is found in the cytoplasm. It catalyses the reaction Endonucleolytic cleavage to 5'-phosphomonoester.. Functionally, endonuclease that specifically degrades the RNA of RNA-DNA hybrids. This chain is Ribonuclease HII, found in Saccharopolyspora erythraea (strain ATCC 11635 / DSM 40517 / JCM 4748 / NBRC 13426 / NCIMB 8594 / NRRL 2338).